A 149-amino-acid polypeptide reads, in one-letter code: Hut operon positive regulatory protein (149 aa).

The protein belongs to the HutP family. In terms of assembly, homohexamer.

Antiterminator that binds to cis-acting regulatory sequences on the mRNA in the presence of histidine, thereby suppressing transcription termination and activating the hut operon for histidine utilization. The sequence is that of Hut operon positive regulatory protein from Geobacillus thermodenitrificans (strain NG80-2).